The following is a 264-amino-acid chain: S-adenosylmethionine decarboxylase proenzyme (264 aa).

The active-site Schiff-base intermediate with substrate; via pyruvic acid is S112. Residue S112 is modified to Pyruvic acid (Ser); by autocatalysis. Catalysis depends on H117, which acts as the Proton acceptor; for processing activity. Catalysis depends on C140, which acts as the Proton donor; for catalytic activity.

It belongs to the prokaryotic AdoMetDC family. Type 2 subfamily. In terms of assembly, heterooctamer of four alpha and four beta chains arranged as a tetramer of alpha/beta heterodimers. It depends on pyruvate as a cofactor. In terms of processing, is synthesized initially as an inactive proenzyme. Formation of the active enzyme involves a self-maturation process in which the active site pyruvoyl group is generated from an internal serine residue via an autocatalytic post-translational modification. Two non-identical subunits are generated from the proenzyme in this reaction, and the pyruvate is formed at the N-terminus of the alpha chain, which is derived from the carboxyl end of the proenzyme. The post-translation cleavage follows an unusual pathway, termed non-hydrolytic serinolysis, in which the side chain hydroxyl group of the serine supplies its oxygen atom to form the C-terminus of the beta chain, while the remainder of the serine residue undergoes an oxidative deamination to produce ammonia and the pyruvoyl group blocking the N-terminus of the alpha chain.

It carries out the reaction S-adenosyl-L-methionine + H(+) = S-adenosyl 3-(methylsulfanyl)propylamine + CO2. It functions in the pathway amine and polyamine biosynthesis; S-adenosylmethioninamine biosynthesis; S-adenosylmethioninamine from S-adenosyl-L-methionine: step 1/1. Catalyzes the decarboxylation of S-adenosylmethionine to S-adenosylmethioninamine (dcAdoMet), the propylamine donor required for the synthesis of the polyamines spermine and spermidine from the diamine putrescine. The polypeptide is S-adenosylmethionine decarboxylase proenzyme (Shigella dysenteriae serotype 1 (strain Sd197)).